The following is an 83-amino-acid chain: Exodeoxyribonuclease 7 small subunit (83 aa).

This sequence belongs to the XseB family. As to quaternary structure, heterooligomer composed of large and small subunits.

Its subcellular location is the cytoplasm. The enzyme catalyses Exonucleolytic cleavage in either 5'- to 3'- or 3'- to 5'-direction to yield nucleoside 5'-phosphates.. Functionally, bidirectionally degrades single-stranded DNA into large acid-insoluble oligonucleotides, which are then degraded further into small acid-soluble oligonucleotides. This chain is Exodeoxyribonuclease 7 small subunit, found in Allorhizobium ampelinum (strain ATCC BAA-846 / DSM 112012 / S4) (Agrobacterium vitis (strain S4)).